The chain runs to 402 residues: C2H2 finger domain transcription factor CON7 (402 aa).

Residues 1 to 247 (MLASSRQPRH…GAQQHKRPRR (247 aa)) are disordered. Composition is skewed to polar residues over residues 19–49 (LSSS…TSVG) and 72–86 (CGDN…TVDT). Positions 87–98 (SSAAQYNASAQQ) are enriched in low complexity. 2 stretches are compositionally biased toward polar residues: residues 99–116 (EVRS…TPTS) and 125–151 (ARSS…SSGD). The C2H2-type zinc-finger motif lies at 256-282 (YKCGWQGCEKAYGTLNHLNAHVTMQSH). The stretch at 289 to 323 (EEFKEIRKEWKARKKEEEAARKADEERQRQAAQSQ) forms a coiled coil. Residues 302 to 317 (KKEEEAARKADEERQR) are compositionally biased toward basic and acidic residues. Positions 302–402 (KKEEEAARKA…GSNQAMYNQR (101 aa)) are disordered. 3 stretches are compositionally biased toward polar residues: residues 322–341 (SQGG…SSNG), 363–373 (AATSTSVQQQP), and 392–402 (GGSNQAMYNQR).

The protein localises to the nucleus. Transcription factor that plays a central role in appressorium formation and pathogenicity. Required for the expression of a large set of genes including factors that might play a role in membrane metabolism and ergosterol biosynthesis, the chitin-binding protein CBP1,as well as CHS7 that is essential for normal pathogenic development. This Pyricularia oryzae (strain 70-15 / ATCC MYA-4617 / FGSC 8958) (Rice blast fungus) protein is C2H2 finger domain transcription factor CON7.